Reading from the N-terminus, the 257-residue chain is NAD-capped RNA hydrolase NudC (257 aa).

Substrate is bound by residues K25 and R69. The Zn(2+) site is built by C98 and C101. E111 is a binding site for substrate. Zn(2+) contacts are provided by C116 and C119. A substrate-binding site is contributed by Y124. Positions 125–248 constitute a Nudix hydrolase domain; the sequence is PQIAPCIIVA…TVARRLIEDT (124 aa). A divalent metal cation contacts are provided by A158, E174, and E178. A Nudix box motif is present at residues 159–180; that stretch reads GFVEVGETLEQAVAREVMEESG. Residue 192–199 participates in substrate binding; the sequence is QPWPFPQS. E219 provides a ligand contact to a divalent metal cation. Substrate is bound at residue A241.

It belongs to the Nudix hydrolase family. NudC subfamily. In terms of assembly, homodimer. It depends on Mg(2+) as a cofactor. Mn(2+) serves as cofactor. Requires Zn(2+) as cofactor.

It carries out the reaction a 5'-end NAD(+)-phospho-ribonucleoside in mRNA + H2O = a 5'-end phospho-adenosine-phospho-ribonucleoside in mRNA + beta-nicotinamide D-ribonucleotide + 2 H(+). The enzyme catalyses NAD(+) + H2O = beta-nicotinamide D-ribonucleotide + AMP + 2 H(+). It catalyses the reaction NADH + H2O = reduced beta-nicotinamide D-ribonucleotide + AMP + 2 H(+). MRNA decapping enzyme that specifically removes the nicotinamide adenine dinucleotide (NAD) cap from a subset of mRNAs by hydrolyzing the diphosphate linkage to produce nicotinamide mononucleotide (NMN) and 5' monophosphate mRNA. The NAD-cap is present at the 5'-end of some mRNAs and stabilizes RNA against 5'-processing. Has preference for mRNAs with a 5'-end purine. Catalyzes the hydrolysis of a broad range of dinucleotide pyrophosphates. In Escherichia coli (strain 55989 / EAEC), this protein is NAD-capped RNA hydrolase NudC.